A 969-amino-acid chain; its full sequence is Manganese resistance protein MNR2 (969 aa).

Residues 1–11 (MSTDNSQKDEG) show a composition bias toward basic and acidic residues. 4 disordered regions span residues 1–49 (MSTD…SRRP), 96–153 (GAFI…DLSP), 167–186 (HKSF…NANN), and 199–256 (VNNN…NNSS). Topologically, residues 1–912 (MSTDNSQKDE…DMNDVLGKIT (912 aa)) are cytoplasmic. Over residues 13–23 (PLLSPYSSSPQ) the composition is skewed to low complexity. The span at 24–36 (LRKKKRNQKRRKD) shows a compositional bias: basic residues. Residues 37-48 (KFVGHLKSDSRR) show a composition bias toward basic and acidic residues. Ser-114 carries the post-translational modification Phosphoserine. Over residues 141 to 152 (SDQNRSLVSDLS) the composition is skewed to polar residues. At Ser-175 the chain carries Phosphoserine. The residue at position 177 (Thr-177) is a Phosphothreonine. Ser-182 carries the post-translational modification Phosphoserine. 2 stretches are compositionally biased toward low complexity: residues 225–234 (NKNSKSTSSD) and 244–256 (SRPS…NNSS). Ser-383 is subject to Phosphoserine. Disordered stretches follow at residues 559-662 (VRRR…KPRE) and 746-769 (QSDD…DEDA). Basic and acidic residues predominate over residues 565–578 (EKQESATLDHESIS). The residue at position 571 (Thr-571) is a Phosphothreonine. 2 positions are modified to phosphoserine: Ser-576 and Ser-582. Composition is skewed to low complexity over residues 590-607 (SNES…ASRS) and 622-632 (ANRTTNTSSSS). The segment covering 749–769 (DSSDSDSSDSDSDSGASDEDA) has biased composition (acidic residues). Residues 913–933 (ILGTIVLPMNVITGLWGMNVI) form a helical membrane-spanning segment. The Extracellular segment spans residues 934–941 (VPGQYRDS). A helical membrane pass occupies residues 942-962 (LTWFIGIVLFMCMLACSAYMY). At 963-969 (TKRRFGF) the chain is on the cytoplasmic side.

This sequence belongs to the CorA metal ion transporter (MIT) (TC 1.A.35) family.

The protein localises to the membrane. This is Manganese resistance protein MNR2 (MNR2) from Saccharomyces cerevisiae (strain ATCC 204508 / S288c) (Baker's yeast).